The sequence spans 727 residues: Ankyrin repeat domain-containing protein 6 (727 aa).

ANK repeat units follow at residues 9 to 38, 41 to 70, 74 to 103, 107 to 136, 140 to 169, 173 to 202, 206 to 235, and 239 to 268; these read ALSE…RVAV, HGRT…DLDV, GDQT…ALDR, DGNT…NVLA, AGNT…RADL, AGDT…SVHE, AGDT…DTTI, and AGQT…VLRF. The interval 277 to 386 is disordered; the sequence is KRERLKEERR…HRCSSPPPPH (110 aa). The segment covering 280-296 has biased composition (basic and acidic residues); that stretch reads RLKEERRAQSVPRDEVA. The segment covering 298 to 312 has biased composition (polar residues); the sequence is SKGSVSAGDTPSSEQ. Residues 314–324 show a composition bias toward basic and acidic residues; it reads VARKEEAREEF. Residues 363 to 379 are compositionally biased toward basic residues; that stretch reads KNLHAHNHPKKRNRHRC. Residues 417–446 are a coiled coil; it reads LINKLENQLEATVEEIKAELGSVQDKMNTK. The span at 548–557 shows a compositional bias: low complexity; the sequence is PAAASDSSPP. Disordered stretches follow at residues 548-586 and 601-657; these read PAAA…CTGS and NEAA…TGPH. The span at 566-584 shows a compositional bias: polar residues; it reads LNSTATQRLQQELSSSDCT. The segment covering 622-633 has biased composition (basic residues); sequence KSGKSGPTRHRA. Positions 682–727 form a coiled coil; sequence WYERKIEEARSQANQKAQQDKATLKEHIKSLEEELAKLRTRVQKEN.

Interacts with AXN1, AXN2 and CSNK1E/CKI-epsilon.

Functionally, recruits CKI-epsilon to the beta-catenin degradation complex that consists of AXN1 or AXN2 and GSK3-beta and allows efficient phosphorylation of beta-catenin, thereby inhibiting beta-catenin/Tcf signals. In Homo sapiens (Human), this protein is Ankyrin repeat domain-containing protein 6 (ANKRD6).